The sequence spans 297 residues: Homoserine kinase (297 aa).

82-92 lines the ATP pocket; it reads PLTRGLGSSAS.

Belongs to the GHMP kinase family. Homoserine kinase subfamily.

The protein localises to the cytoplasm. It carries out the reaction L-homoserine + ATP = O-phospho-L-homoserine + ADP + H(+). The protein operates within amino-acid biosynthesis; L-threonine biosynthesis; L-threonine from L-aspartate: step 4/5. In terms of biological role, catalyzes the ATP-dependent phosphorylation of L-homoserine to L-homoserine phosphate. The polypeptide is Homoserine kinase (Bacillus anthracis (strain CDC 684 / NRRL 3495)).